Here is a 75-residue protein sequence, read N- to C-terminus: UPF0352 protein YejL (75 aa).

It belongs to the UPF0352 family.

This Salmonella agona (strain SL483) protein is UPF0352 protein YejL.